A 703-amino-acid polypeptide reads, in one-letter code: Polyribonucleotide nucleotidyltransferase (703 aa).

Residues D486 and D492 each coordinate Mg(2+). In terms of domain architecture, KH spans 554 to 613 (PKIITTNIDPEKIRDVIGPGGKMINKIIAETGVKIDIEEDGRVYILTPDSAAAQKALKII). The 69-residue stretch at 623-691 (GEVYLGKVVR…KQGRINLSRK (69 aa)) folds into the S1 motif domain.

The protein belongs to the polyribonucleotide nucleotidyltransferase family. It depends on Mg(2+) as a cofactor.

It is found in the cytoplasm. The enzyme catalyses RNA(n+1) + phosphate = RNA(n) + a ribonucleoside 5'-diphosphate. Involved in mRNA degradation. Catalyzes the phosphorolysis of single-stranded polyribonucleotides processively in the 3'- to 5'-direction. This is Polyribonucleotide nucleotidyltransferase from Ruminiclostridium cellulolyticum (strain ATCC 35319 / DSM 5812 / JCM 6584 / H10) (Clostridium cellulolyticum).